Reading from the N-terminus, the 953-residue chain is Isoleucine--tRNA ligase (953 aa).

Residues 57-67 carry the 'HIGH' region motif; the sequence is PYANGDIHIGH. Position 582 (glutamate 582) interacts with L-isoleucyl-5'-AMP. A 'KMSKS' region motif is present at residues 623–627; that stretch reads KMSKS. Residue lysine 626 participates in ATP binding. Zn(2+)-binding residues include cysteine 916, cysteine 919, cysteine 936, and cysteine 939.

Belongs to the class-I aminoacyl-tRNA synthetase family. IleS type 1 subfamily. As to quaternary structure, monomer. It depends on Zn(2+) as a cofactor.

It is found in the cytoplasm. The catalysed reaction is tRNA(Ile) + L-isoleucine + ATP = L-isoleucyl-tRNA(Ile) + AMP + diphosphate. In terms of biological role, catalyzes the attachment of isoleucine to tRNA(Ile). As IleRS can inadvertently accommodate and process structurally similar amino acids such as valine, to avoid such errors it has two additional distinct tRNA(Ile)-dependent editing activities. One activity is designated as 'pretransfer' editing and involves the hydrolysis of activated Val-AMP. The other activity is designated 'posttransfer' editing and involves deacylation of mischarged Val-tRNA(Ile). The polypeptide is Isoleucine--tRNA ligase (Bordetella pertussis (strain Tohama I / ATCC BAA-589 / NCTC 13251)).